A 156-amino-acid polypeptide reads, in one-letter code: Zinc finger SWIM domain-containing protein 7 homolog (156 aa).

An SWIM-type zinc finger spans residues 82–120 (YMCLIQGDYCSCPSFNFSVLLKSDSVYCKHQISSILAEI).

It belongs to the SWS1 family.

Its subcellular location is the nucleus. May be involved in the homologous recombination repair (HRR) pathway of double-stranded DNA breaks arising during DNA replication or induced by DNA-damaging agents. This chain is Zinc finger SWIM domain-containing protein 7 homolog (zswim7), found in Dictyostelium discoideum (Social amoeba).